Here is a 196-residue protein sequence, read N- to C-terminus: Guanylate kinase (196 aa).

The interval 1 to 24 (MPVESGAGNDQPKRLTVLSGPSGV) is disordered. Residues 13–191 (KRLTVLSGPS…VCDELLALIA (179 aa)) form the Guanylate kinase-like domain. 20–27 (GPSGVGKS) is a binding site for ATP.

It belongs to the guanylate kinase family.

The protein resides in the cytoplasm. The catalysed reaction is GMP + ATP = GDP + ADP. Functionally, essential for recycling GMP and indirectly, cGMP. The protein is Guanylate kinase of Thermobifida fusca (strain YX).